A 694-amino-acid polypeptide reads, in one-letter code: Elongation factor G (694 aa).

Residues 11–285 (KDYRNIGIMA…AVIDYLPSPL (275 aa)) form the tr-type G domain. GTP contacts are provided by residues 20 to 27 (AHIDAGKT), 84 to 88 (DTPGH), and 138 to 141 (NKMD).

This sequence belongs to the TRAFAC class translation factor GTPase superfamily. Classic translation factor GTPase family. EF-G/EF-2 subfamily.

It localises to the cytoplasm. Functionally, catalyzes the GTP-dependent ribosomal translocation step during translation elongation. During this step, the ribosome changes from the pre-translocational (PRE) to the post-translocational (POST) state as the newly formed A-site-bound peptidyl-tRNA and P-site-bound deacylated tRNA move to the P and E sites, respectively. Catalyzes the coordinated movement of the two tRNA molecules, the mRNA and conformational changes in the ribosome. The protein is Elongation factor G of Mycoplasma mobile (strain ATCC 43663 / 163K / NCTC 11711) (Mesomycoplasma mobile).